The sequence spans 248 residues: Probable transcriptional regulatory protein RPE_4771 (248 aa).

Positions 1-21 are disordered; it reads MAGHSQFKNIMHRKGRQDAQK.

It belongs to the TACO1 family.

Its subcellular location is the cytoplasm. The polypeptide is Probable transcriptional regulatory protein RPE_4771 (Rhodopseudomonas palustris (strain BisA53)).